The sequence spans 124 residues: Small ribosomal subunit protein uS12 (124 aa).

At aspartate 89 the chain carries 3-methylthioaspartic acid.

Belongs to the universal ribosomal protein uS12 family. In terms of assembly, part of the 30S ribosomal subunit. Contacts proteins S8 and S17. May interact with IF1 in the 30S initiation complex.

With S4 and S5 plays an important role in translational accuracy. Functionally, interacts with and stabilizes bases of the 16S rRNA that are involved in tRNA selection in the A site and with the mRNA backbone. Located at the interface of the 30S and 50S subunits, it traverses the body of the 30S subunit contacting proteins on the other side and probably holding the rRNA structure together. The combined cluster of proteins S8, S12 and S17 appears to hold together the shoulder and platform of the 30S subunit. This is Small ribosomal subunit protein uS12 from Campylobacter hominis (strain ATCC BAA-381 / DSM 21671 / CCUG 45161 / LMG 19568 / NCTC 13146 / CH001A).